Consider the following 173-residue polypeptide: U1 small nuclear ribonucleoprotein C (173 aa).

The Matrin-type zinc finger occupies 4 to 36 (YYCDYCDTYLTHDSPSVRKTHCQGRKHKDNVKF). Residues 72–100 (AAIPPPANMQGPPRPVPPGPMGPGPNMLG) are disordered. A compositionally biased stretch (pro residues) spans 73–94 (AIPPPANMQGPPRPVPPGPMGP).

It belongs to the U1 small nuclear ribonucleoprotein C family. U1 snRNP is composed of the 7 core Sm proteins B/B', D1, D2, D3, E, F and G that assemble in a heptameric protein ring on the Sm site of the small nuclear RNA to form the core snRNP, and at least 3 U1 snRNP-specific proteins U1-70K, U1-A and U1-C. U1-C interacts with U1 snRNA and the 5' splice-site region of the pre-mRNA.

The protein localises to the nucleus. In terms of biological role, component of the spliceosomal U1 snRNP, which is essential for recognition of the pre-mRNA 5' splice-site and the subsequent assembly of the spliceosome. U1-C is directly involved in initial 5' splice-site recognition for both constitutive and regulated alternative splicing. The interaction with the 5' splice-site seems to precede base-pairing between the pre-mRNA and the U1 snRNA. Stimulates commitment or early (E) complex formation by stabilizing the base pairing of the 5' end of the U1 snRNA and the 5' splice-site region. The chain is U1 small nuclear ribonucleoprotein C from Pediculus humanus subsp. corporis (Body louse).